The following is a 236-amino-acid chain: uncharacterized protein (236 aa).

3 residues coordinate NADP(+): D22, N49, and K82. Active-site proton donor residues include S100 and Y114. Residues Y114 and K118 each coordinate NADP(+). Residue K118 is the Lowers pKa of active site Tyr of the active site.

It belongs to the short-chain dehydrogenases/reductases (SDR) family.

The protein localises to the cytoplasm. It is found in the nucleus. This is an uncharacterized protein from Schizosaccharomyces pombe (strain 972 / ATCC 24843) (Fission yeast).